Consider the following 283-residue polypeptide: 4-hydroxy-3-methylbut-2-enyl diphosphate reductase (283 aa).

Residue Cys-12 participates in [4Fe-4S] cluster binding. Positions 40 and 72 each coordinate (2E)-4-hydroxy-3-methylbut-2-enyl diphosphate. Positions 40 and 72 each coordinate dimethylallyl diphosphate. Isopentenyl diphosphate contacts are provided by His-40 and His-72. Cys-94 is a binding site for [4Fe-4S] cluster. His-122 lines the (2E)-4-hydroxy-3-methylbut-2-enyl diphosphate pocket. A dimethylallyl diphosphate-binding site is contributed by His-122. Position 122 (His-122) interacts with isopentenyl diphosphate. Residue Glu-124 is the Proton donor of the active site. A (2E)-4-hydroxy-3-methylbut-2-enyl diphosphate-binding site is contributed by Thr-160. Position 188 (Cys-188) interacts with [4Fe-4S] cluster. Ser-216, Asn-218, and Ser-259 together coordinate (2E)-4-hydroxy-3-methylbut-2-enyl diphosphate. The dimethylallyl diphosphate site is built by Ser-216, Asn-218, and Ser-259. The isopentenyl diphosphate site is built by Ser-216, Asn-218, and Ser-259.

The protein belongs to the IspH family. It depends on [4Fe-4S] cluster as a cofactor.

It catalyses the reaction isopentenyl diphosphate + 2 oxidized [2Fe-2S]-[ferredoxin] + H2O = (2E)-4-hydroxy-3-methylbut-2-enyl diphosphate + 2 reduced [2Fe-2S]-[ferredoxin] + 2 H(+). The enzyme catalyses dimethylallyl diphosphate + 2 oxidized [2Fe-2S]-[ferredoxin] + H2O = (2E)-4-hydroxy-3-methylbut-2-enyl diphosphate + 2 reduced [2Fe-2S]-[ferredoxin] + 2 H(+). Its pathway is isoprenoid biosynthesis; dimethylallyl diphosphate biosynthesis; dimethylallyl diphosphate from (2E)-4-hydroxy-3-methylbutenyl diphosphate: step 1/1. It functions in the pathway isoprenoid biosynthesis; isopentenyl diphosphate biosynthesis via DXP pathway; isopentenyl diphosphate from 1-deoxy-D-xylulose 5-phosphate: step 6/6. In terms of biological role, catalyzes the conversion of 1-hydroxy-2-methyl-2-(E)-butenyl 4-diphosphate (HMBPP) into a mixture of isopentenyl diphosphate (IPP) and dimethylallyl diphosphate (DMAPP). Acts in the terminal step of the DOXP/MEP pathway for isoprenoid precursor biosynthesis. This chain is 4-hydroxy-3-methylbut-2-enyl diphosphate reductase, found in Dictyoglomus turgidum (strain DSM 6724 / Z-1310).